A 357-amino-acid chain; its full sequence is UDP-N-acetylglucosamine--N-acetylmuramyl-(pentapeptide) pyrophosphoryl-undecaprenol N-acetylglucosamine transferase (357 aa).

UDP-N-acetyl-alpha-D-glucosamine contacts are provided by residues Ser13 to Gly15, Arg166, Ser196, and Gln291.

It belongs to the glycosyltransferase 28 family. MurG subfamily.

Its subcellular location is the cell membrane. It catalyses the reaction di-trans,octa-cis-undecaprenyl diphospho-N-acetyl-alpha-D-muramoyl-L-alanyl-D-glutamyl-meso-2,6-diaminopimeloyl-D-alanyl-D-alanine + UDP-N-acetyl-alpha-D-glucosamine = di-trans,octa-cis-undecaprenyl diphospho-[N-acetyl-alpha-D-glucosaminyl-(1-&gt;4)]-N-acetyl-alpha-D-muramoyl-L-alanyl-D-glutamyl-meso-2,6-diaminopimeloyl-D-alanyl-D-alanine + UDP + H(+). It functions in the pathway cell wall biogenesis; peptidoglycan biosynthesis. Functionally, cell wall formation. Catalyzes the transfer of a GlcNAc subunit on undecaprenyl-pyrophosphoryl-MurNAc-pentapeptide (lipid intermediate I) to form undecaprenyl-pyrophosphoryl-MurNAc-(pentapeptide)GlcNAc (lipid intermediate II). This is UDP-N-acetylglucosamine--N-acetylmuramyl-(pentapeptide) pyrophosphoryl-undecaprenol N-acetylglucosamine transferase from Clostridium perfringens (strain ATCC 13124 / DSM 756 / JCM 1290 / NCIMB 6125 / NCTC 8237 / Type A).